The sequence spans 99 residues: Nucleoid-associated protein SUB1611 (99 aa).

This sequence belongs to the YbaB/EbfC family. As to quaternary structure, homodimer.

The protein resides in the cytoplasm. The protein localises to the nucleoid. Functionally, binds to DNA and alters its conformation. May be involved in regulation of gene expression, nucleoid organization and DNA protection. This chain is Nucleoid-associated protein SUB1611, found in Streptococcus uberis (strain ATCC BAA-854 / 0140J).